Here is a 602-residue protein sequence, read N- to C-terminus: Glutamine--fructose-6-phosphate aminotransferase [isomerizing] (602 aa).

The active-site Nucleophile; for GATase activity is cysteine 2. The 221-residue stretch at 2-222 folds into the Glutamine amidotransferase type-2 domain; sequence CGIFGIIFAE…DGEYGYITAG (221 aa). 2 SIS domains span residues 284–422 and 452–592; these read VANA…ALGH and LAKR…PDKP. Catalysis depends on lysine 597, which acts as the For Fru-6P isomerization activity.

In terms of assembly, homodimer.

It localises to the cytoplasm. The catalysed reaction is D-fructose 6-phosphate + L-glutamine = D-glucosamine 6-phosphate + L-glutamate. Functionally, catalyzes the first step in hexosamine metabolism, converting fructose-6P into glucosamine-6P using glutamine as a nitrogen source. The sequence is that of Glutamine--fructose-6-phosphate aminotransferase [isomerizing] from Pyrobaculum aerophilum (strain ATCC 51768 / DSM 7523 / JCM 9630 / CIP 104966 / NBRC 100827 / IM2).